The primary structure comprises 245 residues: 2,3-bisphosphoglycerate-dependent phosphoglycerate mutase (245 aa).

Substrate is bound by residues Arg8–Asn15, Thr21–Gly22, Arg60, Glu87–Tyr90, Lys98, Arg114–Arg115, and Gly183–Asn184. His9 acts as the Tele-phosphohistidine intermediate in catalysis. The Proton donor/acceptor role is filled by Glu87.

It belongs to the phosphoglycerate mutase family. BPG-dependent PGAM subfamily.

The enzyme catalyses (2R)-2-phosphoglycerate = (2R)-3-phosphoglycerate. It functions in the pathway carbohydrate degradation; glycolysis; pyruvate from D-glyceraldehyde 3-phosphate: step 3/5. Functionally, catalyzes the interconversion of 2-phosphoglycerate and 3-phosphoglycerate. This is 2,3-bisphosphoglycerate-dependent phosphoglycerate mutase from Bacillus mycoides (strain KBAB4) (Bacillus weihenstephanensis).